A 793-amino-acid chain; its full sequence is Phenylalanine--tRNA ligase beta subunit (793 aa).

One can recognise a tRNA-binding domain in the interval 39–154; that stretch reads TCSFSSIITA…ENTPLGESAC (116 aa). The region spanning 403-481 is the B5 domain; that stretch reads PQASTLSFRT…QPWKVENKKA (79 aa). Mg(2+) is bound by residues Asp457, Asp463, Glu466, and Glu467. In terms of domain architecture, FDX-ACB spans 697-793; that stretch reads PIYPSSFRDI…QINDTKGTID (97 aa).

It belongs to the phenylalanyl-tRNA synthetase beta subunit family. Type 1 subfamily. Tetramer of two alpha and two beta subunits. Mg(2+) serves as cofactor.

The protein localises to the cytoplasm. The enzyme catalyses tRNA(Phe) + L-phenylalanine + ATP = L-phenylalanyl-tRNA(Phe) + AMP + diphosphate + H(+). The protein is Phenylalanine--tRNA ligase beta subunit of Chlamydia caviae (strain ATCC VR-813 / DSM 19441 / 03DC25 / GPIC) (Chlamydophila caviae).